We begin with the raw amino-acid sequence, 276 residues long: Dermonecrotic toxin LspiSicTox-betaIE4ii (276 aa).

Residue histidine 5 is part of the active site. Mg(2+) is bound by residues glutamate 25 and aspartate 27. Residue histidine 41 is the Nucleophile of the active site. 2 disulfide bridges follow: cysteine 45-cysteine 51 and cysteine 47-cysteine 189. Position 85 (aspartate 85) interacts with Mg(2+).

It belongs to the arthropod phospholipase D family. Class II subfamily. The cofactor is Mg(2+). As to expression, expressed by the venom gland.

It is found in the secreted. It carries out the reaction an N-(acyl)-sphingosylphosphocholine = an N-(acyl)-sphingosyl-1,3-cyclic phosphate + choline. The enzyme catalyses an N-(acyl)-sphingosylphosphoethanolamine = an N-(acyl)-sphingosyl-1,3-cyclic phosphate + ethanolamine. It catalyses the reaction a 1-acyl-sn-glycero-3-phosphocholine = a 1-acyl-sn-glycero-2,3-cyclic phosphate + choline. The catalysed reaction is a 1-acyl-sn-glycero-3-phosphoethanolamine = a 1-acyl-sn-glycero-2,3-cyclic phosphate + ethanolamine. Functionally, dermonecrotic toxins cleave the phosphodiester linkage between the phosphate and headgroup of certain phospholipids (sphingolipid and lysolipid substrates), forming an alcohol (often choline) and a cyclic phosphate. This toxin acts on sphingomyelin (SM). It may also act on ceramide phosphoethanolamine (CPE), lysophosphatidylcholine (LPC) and lysophosphatidylethanolamine (LPE), but not on lysophosphatidylserine (LPS), and lysophosphatidylglycerol (LPG). It acts by transphosphatidylation, releasing exclusively cyclic phosphate products as second products. Induces dermonecrosis, hemolysis, increased vascular permeability, edema, inflammatory response, and platelet aggregation. The sequence is that of Dermonecrotic toxin LspiSicTox-betaIE4ii from Loxosceles spinulosa (Recluse spider).